We begin with the raw amino-acid sequence, 113 residues long: Small ribosomal subunit protein bS6 (113 aa).

This sequence belongs to the bacterial ribosomal protein bS6 family.

Binds together with bS18 to 16S ribosomal RNA. This is Small ribosomal subunit protein bS6 from Flavobacterium psychrophilum (strain ATCC 49511 / DSM 21280 / CIP 103535 / JIP02/86).